Reading from the N-terminus, the 105-residue chain is Replication initiation control protein YabA (105 aa).

The Zn(2+) site is built by His79, Cys81, Cys95, and Cys98.

This sequence belongs to the YabA family. In terms of assembly, homotetramer. Interacts with both DnaA and DnaN, acting as a bridge between these two proteins. The cofactor is Zn(2+).

The protein localises to the cytoplasm. The protein resides in the nucleoid. Its function is as follows. Involved in control of chromosome replication initiation. Inhibits the cooperative binding of DnaA to the oriC region, thus negatively regulating initiation of chromosome replication. Inhibits the ability of DnaA-ATP to form a helix on DNA; does not disassemble preformed DnaA-DNA helices. Decreases the residence time of DnaA on the chromosome at its binding sites (oriC, replication forks and promoter-binding sites). Tethers DnaA to the replication machinery via the DNA polymerase beta sliding clamp subunit (dnaN). Associates with oriC and other DnaA targets on the chromosome in a DnaA-dependent manner. In Streptococcus suis (strain 98HAH33), this protein is Replication initiation control protein YabA.